We begin with the raw amino-acid sequence, 907 residues long: Probable dipeptidyl-aminopeptidase B (907 aa).

Residues 1 to 26 are compositionally biased toward basic and acidic residues; that stretch reads MPRQRAPKEEEAELLTKQERSTRSSE. The disordered stretch occupies residues 1-70; sequence MPRQRAPKEE…EKYTDEDDEA (70 aa). Topologically, residues 1-93 are cytoplasmic; the sequence is MPRQRAPKEE…PVAVDKKTRR (93 aa). A compositionally biased stretch (low complexity) spans 30 to 44; it reads DASVSSISTTSLVLE. The helical; Signal-anchor for type II membrane protein transmembrane segment at 94 to 114 threads the bilayer; the sequence is WLWIVGIACVTGWALALVFFL. The Vacuolar portion of the chain corresponds to 115 to 907; the sequence is MSGSYKHVST…SQVDARLERR (793 aa). A glycan (N-linked (GlcNAc...) asparagine) is linked at Asn560. Catalysis depends on Ser751, which acts as the Charge relay system. Asn805 is a glycosylation site (N-linked (GlcNAc...) asparagine). Catalysis depends on charge relay system residues Asp828 and His861.

The protein belongs to the peptidase S9B family.

Its subcellular location is the vacuole membrane. The enzyme catalyses Release of an N-terminal dipeptide, Xaa-Yaa-|-Zaa-, from a polypeptide, preferentially when Yaa is Pro, provided Zaa is neither Pro nor hydroxyproline.. Type IV dipeptidyl-peptidase which removes N-terminal dipeptides sequentially from polypeptides having unsubstituted N-termini provided that the penultimate residue is proline. This Pyrenophora teres f. teres (strain 0-1) (Barley net blotch fungus) protein is Probable dipeptidyl-aminopeptidase B (dapB).